The following is a 285-amino-acid chain: Urease accessory protein UreD (285 aa).

This sequence belongs to the UreD family. UreD, UreF and UreG form a complex that acts as a GTP-hydrolysis-dependent molecular chaperone, activating the urease apoprotein by helping to assemble the nickel containing metallocenter of UreC. The UreE protein probably delivers the nickel.

It localises to the cytoplasm. Its function is as follows. Required for maturation of urease via the functional incorporation of the urease nickel metallocenter. The protein is Urease accessory protein UreD of Cenarchaeum symbiosum (strain A).